Here is a 101-residue protein sequence, read N- to C-terminus: Small ribosomal subunit protein eS24 (101 aa).

This sequence belongs to the eukaryotic ribosomal protein eS24 family.

The polypeptide is Small ribosomal subunit protein eS24 (Methanosarcina mazei (strain ATCC BAA-159 / DSM 3647 / Goe1 / Go1 / JCM 11833 / OCM 88) (Methanosarcina frisia)).